The primary structure comprises 404 residues: DNA polymerase processivity factor BMRF1 (404 aa).

The tract at residues 1–300 (METTQTLRFK…SVILFNHASE (300 aa)) is homodimerization; DNA binding and DNA polymerase processivity. The tract at residues 301-404 (EAAASTASEP…KVKQAFNPLI (104 aa)) is transcriptional activation. A disordered region spans residues 302–404 (AAASTASEPE…KVKQAFNPLI (103 aa)). Pro residues predominate over residues 335-344 (SPSPPPPPRT). Ser-337 carries the phosphoserine modification. A Phosphothreonine modification is found at Thr-344. Ser-349 is modified (phosphoserine). The residue at position 355 (Thr-355) is a Phosphothreonine.

Belongs to the herpesviridae DNA polymerase accessory subunit family. Homodimer. Two dimers can adopt a tetrameric ring-like structure. Forms a complex with the DNA-binding protein BALF2, the DNA polymerase subunit BALF5, and the alkaline exonuclease BGLF5. Interacts (via N-terminus) with BZLF1 (via bZIP domain); this interaction may inhibit BZLF1-induced transcription of the BMRF1 promoter. Interacts (via C-terminus) with host NuRD complex; this interaction is important for transcriptional activation of EBV promoters and inhibition of the ubiquitination step of DDR signaling. Post-translationally, phosphorylated by the viral BGLF4 kinase.

The protein localises to the virion tegument. The protein resides in the host nucleus. Functionally, acts as a DNA polymerase processivity factor; a transcriptional activator for several EBV promoters and inhibits the host DNA damage response (DDR) to double-stranded DNA breaks. Plays an essential role in the viral lytic DNA replication by acting as a polymerase accessory subunit. Stimulates the viral DNA polymerase activity and appears to function with it as a holoenzyme. Increases the processivity of the viral polymerase, probably by acting as a sliding clamp that prevents dissociation of the polymerase from the active template. In addition, BMRF1 transcriptionally activates the oriLyt early BHLF1 promoter. Promotes G1/S cell cycle arrest through p53 induction. In Epstein-Barr virus (strain AG876) (HHV-4), this protein is DNA polymerase processivity factor BMRF1.